The sequence spans 763 residues: DNA-binding protein SATB1 (763 aa).

Basic and acidic residues predominate over residues 1–15 (MDHLNEATQGKEHSE). The segment at 1–54 (MDHLNEATQGKEHSEMSNNVSDPKGPPAKIARLEQNGSPLGRGRLGSTGAKMQG) is disordered. A Nuclear localization signal motif is present at residues 20–40 (VSDPKGPPAKIARLEQNGSPL). Lys-51 participates in a covalent cross-link: Glycyl lysine isopeptide (Lys-Gly) (interchain with G-Cter in SUMO2). Residues 71–172 (GTMLPVFCVV…VVTLKIQLHS (102 aa)) enclose the CMP domain. Lys-136 carries the post-translational modification N6-acetyllysine. The short motif at 139–143 (PVPLS) is the Protein interaction element. One can recognise a CUTL domain in the interval 175–248 (KLEDLPPEQW…WYKHFKKTKD (74 aa)). A Phosphoserine modification is found at Ser-185. The nuclear matrix targeting sequence (NMTS) stretch occupies residues 224–278 (YYANVSAAKCQEFGRWYKHFKKTKDMMVEMDSLSELSQQGANHVNFGQQPVPGNT). The segment covering 266-296 (HVNFGQQPVPGNTAEQPPSPAQLSHGSQPSV) has biased composition (polar residues). A disordered region spans residues 266-307 (HVNFGQQPVPGNTAEQPPSPAQLSHGSQPSVRTPLPNLHPGL). DNA-binding regions (CUT) lie at residues 361–448 (LEQQ…QDER) and 484–571 (NGKP…EQES). DNA contacts are provided by residues Gln-390, 400-410 (RTQGLLSEILR), and Asn-425. Over residues 591 to 607 (QIQQQQQQQQQQQQQQQ) the composition is skewed to low complexity. Positions 591-649 (QIQQQQQQQQQQQQQQQAPPPPQPQQQPQTGPRLPPRQPTVASPAESDEENRQKTRPRT) are disordered. Residue Ser-637 is modified to Phosphoserine. Residues 645-704 (TRPRTKISVEALGILQSFIQDVGLYPDEEAIQTLSAQLDLPKYTIIKFFQNQRYYLKHHG) constitute a DNA-binding region (homeobox). Lys-744 is covalently cross-linked (Glycyl lysine isopeptide (Lys-Gly) (interchain with G-Cter in SUMO)).

Belongs to the CUT homeobox family. In terms of assembly, interacts with CUX1 (via DNA-binding domains); the interaction inhibits the attachment of both proteins to DNA. Homodimer. Part of the nuclear protein complex gamma-globin promoter and enhancer binding factor (gamma-PE) composed at least of SATB1 and HOXB2. Interaction with CtBP1 when not acetylated stabilizes attachment to DNA and promotes transcription repression. Interacts with PCAF. Interacts with sumoylated PML and HDAC1 via the CMP domain. Interacts also with DYNLT3 and POLR2J2. Binds to EP300. (Microbial infection) Interacts (via the CMP domain) with HIV-1 Tat. Post-translationally, sumoylated. Sumoylation promotes cleavage by caspases. In terms of processing, phosphorylated by PKC. Acetylated by PCAF. Phosphorylated form interacts with HDAC1, but unphosphorylated form interacts with PCAF. DNA binding properties are activated by phosphorylation and inactivated by acetylation. In opposition, gene expression is down-regulated by phosphorylation but up-regulated by acetylation. Cleaved at Asp-254 by caspase-3 and caspase-6 during T-cell apoptosis in thymus and during B-cell stimulation. The cleaved forms cannot dimerize and lose transcription regulation function because of impaired DNA and chromatin association. Expressed predominantly in thymus.

The protein resides in the nucleus matrix. Its subcellular location is the nucleus. The protein localises to the PML body. Its function is as follows. Crucial silencing factor contributing to the initiation of X inactivation mediated by Xist RNA that occurs during embryogenesis and in lymphoma. Binds to DNA at special AT-rich sequences, the consensus SATB1-binding sequence (CSBS), at nuclear matrix- or scaffold-associated regions. Thought to recognize the sugar-phosphate structure of double-stranded DNA. Transcriptional repressor controlling nuclear and viral gene expression in a phosphorylated and acetylated status-dependent manner, by binding to matrix attachment regions (MARs) of DNA and inducing a local chromatin-loop remodeling. Acts as a docking site for several chromatin remodeling enzymes (e.g. PML at the MHC-I locus) and also by recruiting corepressors (HDACs) or coactivators (HATs) directly to promoters and enhancers. Modulates genes that are essential in the maturation of the immune T-cell CD8SP from thymocytes. Required for the switching of fetal globin species, and beta- and gamma-globin genes regulation during erythroid differentiation. Plays a role in chromatin organization and nuclear architecture during apoptosis. Interacts with the unique region (UR) of cytomegalovirus (CMV). Alu-like motifs and SATB1-binding sites provide a unique chromatin context which seems preferentially targeted by the HIV-1 integration machinery. Moreover, HIV-1 Tat may overcome SATB1-mediated repression of IL2 and IL2RA (interleukin) in T-cells by binding to the same domain than HDAC1. Delineates specific epigenetic modifications at target gene loci, directly up-regulating metastasis-associated genes while down-regulating tumor-suppressor genes. Reprograms chromatin organization and the transcription profiles of breast tumors to promote growth and metastasis. Promotes neuronal differentiation of neural stem/progenitor cells in the adult subventricular zone, possibly by positively regulating the expression of NEUROD1. The polypeptide is DNA-binding protein SATB1 (Homo sapiens (Human)).